We begin with the raw amino-acid sequence, 470 residues long: Siroheme synthase (470 aa).

The precorrin-2 dehydrogenase /sirohydrochlorin ferrochelatase stretch occupies residues 1 to 213 (MSDATDPGWF…GEHAAARQVL (213 aa)). Residues 28-29 (GI) and 49-50 (PR) each bind NAD(+). The interval 224-470 (GEVWLVGAGP…VVTPPPLSGT (247 aa)) is uroporphyrinogen-III C-methyltransferase. An S-adenosyl-L-methionine-binding site is contributed by Pro233. Asp256 acts as the Proton acceptor in catalysis. Lys278 acts as the Proton donor in catalysis. S-adenosyl-L-methionine-binding positions include 309 to 311 (GGD), Ile314, 339 to 340 (TA), Met392, and Gly421.

It in the N-terminal section; belongs to the precorrin-2 dehydrogenase / sirohydrochlorin ferrochelatase family. This sequence in the C-terminal section; belongs to the precorrin methyltransferase family.

It catalyses the reaction uroporphyrinogen III + 2 S-adenosyl-L-methionine = precorrin-2 + 2 S-adenosyl-L-homocysteine + H(+). It carries out the reaction precorrin-2 + NAD(+) = sirohydrochlorin + NADH + 2 H(+). The enzyme catalyses siroheme + 2 H(+) = sirohydrochlorin + Fe(2+). It participates in cofactor biosynthesis; adenosylcobalamin biosynthesis; precorrin-2 from uroporphyrinogen III: step 1/1. Its pathway is cofactor biosynthesis; adenosylcobalamin biosynthesis; sirohydrochlorin from precorrin-2: step 1/1. The protein operates within porphyrin-containing compound metabolism; siroheme biosynthesis; precorrin-2 from uroporphyrinogen III: step 1/1. It functions in the pathway porphyrin-containing compound metabolism; siroheme biosynthesis; siroheme from sirohydrochlorin: step 1/1. It participates in porphyrin-containing compound metabolism; siroheme biosynthesis; sirohydrochlorin from precorrin-2: step 1/1. Multifunctional enzyme that catalyzes the SAM-dependent methylations of uroporphyrinogen III at position C-2 and C-7 to form precorrin-2 via precorrin-1. Then it catalyzes the NAD-dependent ring dehydrogenation of precorrin-2 to yield sirohydrochlorin. Finally, it catalyzes the ferrochelation of sirohydrochlorin to yield siroheme. The chain is Siroheme synthase from Gluconacetobacter diazotrophicus (strain ATCC 49037 / DSM 5601 / CCUG 37298 / CIP 103539 / LMG 7603 / PAl5).